The chain runs to 312 residues: MEIIFYHPTFNAAWWVNALEKALPHARVREWKVGDNNPADYALVWQPPVEMLAGRRLKAVFVLGAGVDAILSKLNAHPEMLDASIPLFRLEDTGMGLQMQEYAVSQVLHWFRRFDDYQALKNQALWKPLPEYTREEFSVGIMGAGVLGAKVAESLQAWGFPLRCWSRSRKSWPGVESYVGREELRAFLNQTRVLINLLPNTAQTVGIINSELLDQLPDGAYVLNLARGVHVQEADLLAALDSGKLKGAMLDVFSQEPLPQESPLWRHPRVAMTPHIAAVTRPAEAIDYISRTITQLEKGEPVTGQVDRARGY.

R227 is a catalytic residue. The active-site Proton donor is the H275.

It belongs to the D-isomer specific 2-hydroxyacid dehydrogenase family. GhrA subfamily.

The protein resides in the cytoplasm. The enzyme catalyses glycolate + NADP(+) = glyoxylate + NADPH + H(+). It catalyses the reaction (R)-glycerate + NAD(+) = 3-hydroxypyruvate + NADH + H(+). It carries out the reaction (R)-glycerate + NADP(+) = 3-hydroxypyruvate + NADPH + H(+). In terms of biological role, catalyzes the NADPH-dependent reduction of glyoxylate and hydroxypyruvate into glycolate and glycerate, respectively. The sequence is that of Glyoxylate/hydroxypyruvate reductase A from Salmonella paratyphi C (strain RKS4594).